The chain runs to 173 residues: Mesencephalic astrocyte-derived neurotrophic factor homolog (173 aa).

The signal sequence occupies residues 1 to 22 (MNTSQIVLMFCLVVGVAQTALA). Cystine bridges form between Cys28/Cys114, Cys31/Cys103, Cys61/Cys72, and Cys148/Cys151.

Belongs to the ARMET family.

It localises to the secreted. In terms of biological role, required during the maturation of the embryonic nervous system for maintenance of neuronal and cuticular connectivity. Essential for maintenance of dopaminergic neurons and dopamine levels. The chain is Mesencephalic astrocyte-derived neurotrophic factor homolog from Drosophila grimshawi (Hawaiian fruit fly).